The following is a 130-amino-acid chain: MVMTDPIADMLTRIRNANQMSHLKVLVPASKLKLEILAVLKKEGFIKDFYLPQSSREIIISLKYAPNKERVIKGLKRVSKPGLRVYASAEQIPKVLNGLGVALVSTSKGILTDAQARLSQVGGEVLAYIW.

Belongs to the universal ribosomal protein uS8 family. As to quaternary structure, part of the 30S ribosomal subunit. Contacts proteins S5 and S12.

One of the primary rRNA binding proteins, it binds directly to 16S rRNA central domain where it helps coordinate assembly of the platform of the 30S subunit. This chain is Small ribosomal subunit protein uS8, found in Onion yellows phytoplasma (strain OY-M).